The primary structure comprises 712 residues: Transcriptional regulator GZF3 (712 aa).

Residues 1 to 13 (MSMSDIQQRPQIP) show a composition bias toward polar residues. 5 disordered regions span residues 1–20 (MSMS…TAAV), 27–135 (NVNT…GPVC), 173–280 (SLKT…HHHL), 377–533 (DVSS…GNNF), and 596–712 (LNNN…KVKI). Composition is skewed to low complexity over residues 27–84 (NVNT…EQSS) and 107–131 (PKTG…ISMS). The GATA-type zinc finger occupies 135–159 (CGNCQTQTTPLWRRDETGQVLCNAC). The segment covering 186–199 (KQNGSNSQSSKSSG) has biased composition (low complexity). Positions 213-223 (GKKSPKSKKKS) are enriched in basic residues. Positions 246–261 (ATSNNTPTFKSTTSQS) are enriched in polar residues. Basic residues predominate over residues 268–280 (NHHHQHHNHHHHL). The segment covering 379–414 (SSINGSSTSLSSSSASSSIFSSVAPSTSSSSSLSNG) has biased composition (low complexity). 2 stretches are compositionally biased toward polar residues: residues 429-447 (SKIS…TPLQ) and 484-498 (QQSM…RSPI). Composition is skewed to low complexity over residues 499–532 (NGNQ…NGNN) and 596–616 (LNNN…QPQQ). The stretch at 545 to 598 (TRISELELVNDLYRTRIMELEAMEQAARLRENSMKKRLDEVMNLQINYQNLLNN) forms a coiled coil. Positions 631 to 667 (DQGSQSISPNVSITGSTTITSPNSRSKIISETTPTHH) are enriched in polar residues.

Its subcellular location is the nucleus. Probable transcription factor involved in response to fluconazole, LiCl, and copper. The protein is Transcriptional regulator GZF3 (GZF3) of Candida albicans (strain SC5314 / ATCC MYA-2876) (Yeast).